The primary structure comprises 458 residues: Argininosuccinate lyase (458 aa).

This sequence belongs to the lyase 1 family. Argininosuccinate lyase subfamily.

It localises to the cytoplasm. The enzyme catalyses 2-(N(omega)-L-arginino)succinate = fumarate + L-arginine. It functions in the pathway amino-acid biosynthesis; L-arginine biosynthesis; L-arginine from L-ornithine and carbamoyl phosphate: step 3/3. In Salmonella paratyphi A (strain ATCC 9150 / SARB42), this protein is Argininosuccinate lyase.